A 130-amino-acid chain; its full sequence is Small ribosomal subunit protein bS16 (130 aa).

The segment at 80–130 is disordered; that stretch reads AGHTPKKERANMKKAQPGKKAVERAEEKAAKASAAAEAPAEAPAAEAAAEE. The segment covering 99-109 has biased composition (basic and acidic residues); that stretch reads KAVERAEEKAA. A compositionally biased stretch (low complexity) spans 110–130; it reads KASAAAEAPAEAPAAEAAAEE.

The protein belongs to the bacterial ribosomal protein bS16 family.

The polypeptide is Small ribosomal subunit protein bS16 (Jannaschia sp. (strain CCS1)).